The following is a 546-amino-acid chain: CTP synthase (546 aa).

The tract at residues 1–265 (MTKYVFVTGG…DEIVCHKLGI (265 aa)) is amidoligase domain. Position 13 (Ser13) interacts with CTP. UTP is bound at residue Ser13. ATP is bound by residues 14 to 19 (SLGKGI) and Asp71. The Mg(2+) site is built by Asp71 and Glu139. CTP contacts are provided by residues 146 to 148 (DIE), 186 to 191 (KTKPTQ), and Lys222. UTP contacts are provided by residues 186-191 (KTKPTQ) and Lys222. Residues 290–543 (DIAFVGKYVD…VKAAIARHSA (254 aa)) form the Glutamine amidotransferase type-1 domain. Gly351 provides a ligand contact to L-glutamine. The active-site Nucleophile; for glutamine hydrolysis is the Cys378. Residues 379–382 (LGMQ), Glu402, and Arg469 each bind L-glutamine. Residues His516 and Glu518 contribute to the active site.

The protein belongs to the CTP synthase family. Homotetramer.

It carries out the reaction UTP + L-glutamine + ATP + H2O = CTP + L-glutamate + ADP + phosphate + 2 H(+). The catalysed reaction is L-glutamine + H2O = L-glutamate + NH4(+). It catalyses the reaction UTP + NH4(+) + ATP = CTP + ADP + phosphate + 2 H(+). It functions in the pathway pyrimidine metabolism; CTP biosynthesis via de novo pathway; CTP from UDP: step 2/2. With respect to regulation, allosterically activated by GTP, when glutamine is the substrate; GTP has no effect on the reaction when ammonia is the substrate. The allosteric effector GTP functions by stabilizing the protein conformation that binds the tetrahedral intermediate(s) formed during glutamine hydrolysis. Inhibited by the product CTP, via allosteric rather than competitive inhibition. Its function is as follows. Catalyzes the ATP-dependent amination of UTP to CTP with either L-glutamine or ammonia as the source of nitrogen. Regulates intracellular CTP levels through interactions with the four ribonucleotide triphosphates. The chain is CTP synthase from Azoarcus sp. (strain BH72).